Here is a 201-residue protein sequence, read N- to C-terminus: Recombination protein RecR (201 aa).

The C4-type zinc finger occupies 60–75 (CKYCQSLTEKDVCDIC). Residues 83–177 (SKLCIIESML…KISRIGFGVP (95 aa)) enclose the Toprim domain.

It belongs to the RecR family.

Functionally, may play a role in DNA repair. It seems to be involved in an RecBC-independent recombinational process of DNA repair. It may act with RecF and RecO. This is Recombination protein RecR from Francisella philomiragia subsp. philomiragia (strain ATCC 25017 / CCUG 19701 / FSC 153 / O#319-036).